The sequence spans 1243 residues: Protein MMS22-like (1243 aa).

Belongs to the MMS22 family. MMS22L subfamily. As to quaternary structure, component of the MMS22L-TONSL complex, a complex at least composed of MMS22L and TONSL/NFKBIL2. Interacts with RAD51; interaction is direct. Post-translationally, degraded by the ubiquitin-proteasome system upon replication stress.

The protein localises to the nucleus. It is found in the chromosome. In terms of biological role, component of the MMS22L-TONSL complex, a complex that promotes homologous recombination-mediated repair of double-strand breaks (DSBs) at stalled or collapsed replication forks. The MMS22L-TONSL complex is required to maintain genome integrity during DNA replication. It mediates the assembly of RAD51 filaments on single-stranded DNA (ssDNA): the MMS22L-TONSL complex is recruited to DSBs following histone replacement by histone chaperones and eviction of the replication protein A complex (RPA/RP-A) from DSBs. Following recruitment to DSBs, the TONSL-MMS22L complex promotes recruitment of RAD51 filaments and subsequent homologous recombination. Within the complex, MMS22L acts by binding ssDNA. This Homo sapiens (Human) protein is Protein MMS22-like.